The chain runs to 1747 residues: E3 ubiquitin-protein ligase listerin (1747 aa).

The segment at 1-24 is disordered; it reads MGGKTKQAPRTKNNAKPSSSSRTA. The segment covering 8-24 has biased composition (polar residues); it reads APRTKNNAKPSSSSRTA. HEAT repeat units follow at residues 65 to 102, 106 to 144, 346 to 383, 424 to 461, and 508 to 547; these read AAIS…QSDV, KNIL…KCKK, NIRK…KVTQ, NAYF…NVLE, and KFWI…ANPS. Ser-566 carries the phosphoserine modification. HEAT repeat units follow at residues 612–653, 664–711, 789–825, 952–989, 1005–1042, 1053–1090, 1129–1166, 1216–1258, 1269–1307, 1330–1363, 1364–1400, and 1500–1539; these read SRYI…LLGQ, EIVF…CAEA, SFIA…EHRP, LSRN…DPED, KWNE…ELVL, GNSS…FCPQ, KLSQ…NFEG, VEFI…SIAQ, VAVY…LFAK, FQAC…NSNI, TLDH…HFVA, and ENFL…QKDR. The RING-type zinc-finger motif lies at 1697 to 1744; it reads CYVCYTVIHQETCQLPKLTCKTCKKKFHGPCLYKWFTTSSKSTCPICR.

The protein belongs to the LTN1 family. Component of the ribosome quality control complex (RQC), composed of at least the E3 ubiquitin ligase l(3)76BDr/LTN1 and Clbn/NEMF. The complex probably also contains TCF25 as well as TER94/VCP and its ubiquitin-binding cofactors. RQC forms a stable complex with 60S ribosomal subunits.

The protein localises to the cytoplasm. It is found in the cytosol. The catalysed reaction is S-ubiquitinyl-[E2 ubiquitin-conjugating enzyme]-L-cysteine + [acceptor protein]-L-lysine = [E2 ubiquitin-conjugating enzyme]-L-cysteine + N(6)-ubiquitinyl-[acceptor protein]-L-lysine.. The protein operates within protein modification; protein ubiquitination. E3 ubiquitin-protein ligase component of the ribosome quality control complex (RQC), a ribosome-associated complex that mediates ubiquitination and extraction of incompletely synthesized nascent chains for proteasomal degradation. Ubiquitination leads to TER94/VCP recruitment for extraction and degradation of the incomplete translation product. The sequence is that of E3 ubiquitin-protein ligase listerin from Drosophila melanogaster (Fruit fly).